The primary structure comprises 298 residues: ATP synthase gamma chain (298 aa).

It belongs to the ATPase gamma chain family. F-type ATPases have 2 components, CF(1) - the catalytic core - and CF(0) - the membrane proton channel. CF(1) has five subunits: alpha(3), beta(3), gamma(1), delta(1), epsilon(1). CF(0) has three main subunits: a, b and c.

It is found in the cell inner membrane. Its function is as follows. Produces ATP from ADP in the presence of a proton gradient across the membrane. The gamma chain is believed to be important in regulating ATPase activity and the flow of protons through the CF(0) complex. This Francisella tularensis subsp. holarctica (strain LVS) protein is ATP synthase gamma chain.